Reading from the N-terminus, the 622-residue chain is 1-deoxy-D-xylulose-5-phosphate synthase (622 aa).

Residues H80 and 121–123 (GHS) each bind thiamine diphosphate. D152 is a Mg(2+) binding site. Thiamine diphosphate contacts are provided by residues 153-154 (GA), N181, Y288, and E370. A Mg(2+)-binding site is contributed by N181.

It belongs to the transketolase family. DXPS subfamily. In terms of assembly, homodimer. Mg(2+) serves as cofactor. It depends on thiamine diphosphate as a cofactor.

The enzyme catalyses D-glyceraldehyde 3-phosphate + pyruvate + H(+) = 1-deoxy-D-xylulose 5-phosphate + CO2. It participates in metabolic intermediate biosynthesis; 1-deoxy-D-xylulose 5-phosphate biosynthesis; 1-deoxy-D-xylulose 5-phosphate from D-glyceraldehyde 3-phosphate and pyruvate: step 1/1. Its function is as follows. Catalyzes the acyloin condensation reaction between C atoms 2 and 3 of pyruvate and glyceraldehyde 3-phosphate to yield 1-deoxy-D-xylulose-5-phosphate (DXP). The chain is 1-deoxy-D-xylulose-5-phosphate synthase from Hamiltonella defensa subsp. Acyrthosiphon pisum (strain 5AT).